We begin with the raw amino-acid sequence, 506 residues long: RNA-splicing ligase RtcB homolog 1 (506 aa).

The Mn(2+) site is built by Asp120, Cys123, His228, His260, and His354. 227-231 (NHYAE) is a binding site for GMP. GMP contacts are provided by residues 354-355 (HN), 403-406 (GGSM), Ser410, 429-432 (HGAG), and Lys505. His429 (GMP-histidine intermediate) is an active-site residue.

Belongs to the RtcB family. As to quaternary structure, catalytic component of the tRNA-splicing ligase complex. Mn(2+) is required as a cofactor.

The catalysed reaction is a 3'-end 3'-phospho-ribonucleotide-RNA + a 5'-end dephospho-ribonucleoside-RNA + GTP = a ribonucleotidyl-ribonucleotide-RNA + GMP + diphosphate. The enzyme catalyses a 3'-end 2',3'-cyclophospho-ribonucleotide-RNA + a 5'-end dephospho-ribonucleoside-RNA + GTP + H2O = a ribonucleotidyl-ribonucleotide-RNA + GMP + diphosphate + H(+). Catalytic subunit of the tRNA-splicing ligase complex that acts by directly joining spliced tRNA halves to mature-sized tRNAs by incorporating the precursor-derived splice junction phosphate into the mature tRNA as a canonical 3',5'-phosphodiester. May act as an RNA ligase with broad substrate specificity, and may function toward other RNAs. This Culex quinquefasciatus (Southern house mosquito) protein is RNA-splicing ligase RtcB homolog 1.